The primary structure comprises 435 residues: Enolase (435 aa).

Position 163 (Gln-163) interacts with (2R)-2-phosphoglycerate. The Proton donor role is filled by Glu-205. Residues Asp-243, Glu-292, and Asp-319 each coordinate Mg(2+). (2R)-2-phosphoglycerate contacts are provided by Lys-344, Arg-373, Ser-374, and Lys-395. Lys-344 (proton acceptor) is an active-site residue.

It belongs to the enolase family. It depends on Mg(2+) as a cofactor.

It localises to the cytoplasm. The protein resides in the secreted. The protein localises to the cell surface. The enzyme catalyses (2R)-2-phosphoglycerate = phosphoenolpyruvate + H2O. The protein operates within carbohydrate degradation; glycolysis; pyruvate from D-glyceraldehyde 3-phosphate: step 4/5. Its function is as follows. Catalyzes the reversible conversion of 2-phosphoglycerate (2-PG) into phosphoenolpyruvate (PEP). It is essential for the degradation of carbohydrates via glycolysis. In Streptococcus pyogenes serotype M12 (strain MGAS2096), this protein is Enolase.